Consider the following 89-residue polypeptide: Small ribosomal subunit protein uS15 (89 aa).

The protein belongs to the universal ribosomal protein uS15 family. Part of the 30S ribosomal subunit. Forms a bridge to the 50S subunit in the 70S ribosome, contacting the 23S rRNA.

In terms of biological role, one of the primary rRNA binding proteins, it binds directly to 16S rRNA where it helps nucleate assembly of the platform of the 30S subunit by binding and bridging several RNA helices of the 16S rRNA. Functionally, forms an intersubunit bridge (bridge B4) with the 23S rRNA of the 50S subunit in the ribosome. The protein is Small ribosomal subunit protein uS15 of Actinobacillus pleuropneumoniae serotype 5b (strain L20).